The primary structure comprises 486 residues: UDP-N-acetylmuramate--L-alanine ligase (486 aa).

Position 126-132 (126-132 (GTHGKTS)) interacts with ATP.

Belongs to the MurCDEF family.

The protein resides in the cytoplasm. The enzyme catalyses UDP-N-acetyl-alpha-D-muramate + L-alanine + ATP = UDP-N-acetyl-alpha-D-muramoyl-L-alanine + ADP + phosphate + H(+). It participates in cell wall biogenesis; peptidoglycan biosynthesis. Functionally, cell wall formation. The polypeptide is UDP-N-acetylmuramate--L-alanine ligase (Buchnera aphidicola subsp. Baizongia pistaciae (strain Bp)).